The following is a 260-amino-acid chain: LOB domain-containing protein 6 (260 aa).

The LOB domain occupies 32–133 (SPCAACKFLR…QDLARAKYEL (102 aa)).

Belongs to the LOB domain-containing protein family. Interacts with RS2. As to expression, expressed in leaves, leaf primordia, immature ears, immature tassels, whole ovules, silk and husk leaves. Found on the adaxial side of organs.

Its subcellular location is the nucleus. Functionally, promotes the switch from proliferation to differentiation in the embryo sac. Negative regulator of cell proliferation in the adaxial side of leaves. Regulates the formation of a symmetric lamina and the establishment of venation. Interacts directly with RS2 (rough sheath 2) to repress some knox homeobox genes. The protein is LOB domain-containing protein 6 (LBD6) of Zea mays (Maize).